We begin with the raw amino-acid sequence, 541 residues long: uncharacterized protein (541 aa).

Positions 1–55 form a signal peptide, tat-type signal; that stretch reads MTKTVTRAGGASGPQQFQSGGETMKYEITRRRFLAASSAVLAAPAIVTMVRPARA. The interval 339–362 is disordered; the sequence is RRSPSGISSPRSNRQPKAEALSAR. A compositionally biased stretch (low complexity) spans 341–351; that stretch reads SPSGISSPRSN. 4 consecutive transmembrane segments (helical) span residues 379–399, 420–440, 466–486, and 500–520; these read AIVW…MVFM, LPVL…AHSG, LVSA…GEIA, and VGYF…LAVA.

This sequence belongs to the bacterial solute-binding protein 7 family. Post-translationally, predicted to be exported by the Tat system. The position of the signal peptide cleavage has not been experimentally proven.

The protein localises to the cell membrane. This is an uncharacterized protein from Sinorhizobium fredii (strain NBRC 101917 / NGR234).